The chain runs to 212 residues: High frequency lysogenization protein HflD homolog (212 aa).

The protein belongs to the HflD family.

Its subcellular location is the cytoplasm. The protein localises to the cell inner membrane. This is High frequency lysogenization protein HflD homolog from Pectobacterium carotovorum subsp. carotovorum (strain PC1).